The sequence spans 426 residues: MKMPLTWYSWFLLSAWILNTGAEISITPEPAQPAEGDNVTLVVHGLSGELLAYNWYAGPTLSLTFLVASYIVSTGDETPGPAHTGREAVRPDGSLDIHGALPGHTGTYILQTLNRQFQTEVGYGHMQVYEILAPPTVMANDTALVERRDTLRLVCSSPSPAEVRWFFNGDALPVAVRLGMSPDGRMLTRHGVRREEAGAYQCEVWNPVSVSRSEPLNLTVYFGPERVAILQDSTTRTGCTIKVDFNMSLTLWCVARSCPEPEYVWAFNGKALKNGQDHLNISSMTAAHEGTYTCIAKNSKTLLSGSASVVVKLSAAAVAMMIVPVPTKPTEGQDVTLTVQGYPKDLLVYAWYRGPASEPNRLLSQLPSGNWIAGPAHTGREVGFANCSLLVQKLNLTDAGRYTLKTVTLQGKTDTLEVELQVAPLE.

A signal peptide spans 1-22 (MKMPLTWYSWFLLSAWILNTGA). The N-linked (GlcNAc...) asparagine glycan is linked to asparagine 38. The disordered stretch occupies residues 77–96 (ETPGPAHTGREAVRPDGSLD). The segment covering 84-95 (TGREAVRPDGSL) has biased composition (basic and acidic residues). 2 consecutive Ig-like C2-type domains span residues 134 to 219 (PPTV…LNLT) and 224 to 310 (PERV…ASVV). Cysteine 155 and cysteine 202 form a disulfide bridge. The N-linked (GlcNAc...) asparagine glycan is linked to asparagine 217. Cysteine 253 and cysteine 294 are disulfide-bonded.

Belongs to the immunoglobulin superfamily. CEA family. In terms of assembly, homooligomer; can for homodimers and homotetramers. Interacts with TECTA and TECTB. In terms of tissue distribution, expressed in cochlear outer hair cells (OHC).

The protein resides in the secreted. Required for proper hearing, plays a role in maintaining the integrity of the tectorial membrane. The protein is Cell adhesion molecule CEACAM16 of Mus musculus (Mouse).